The chain runs to 124 residues: Small ribosomal subunit protein uS13 (124 aa).

Residues 94–124 are disordered; the sequence is GLPLRGQRTKNNSRTRKGKRKTVANKKKATK. Residues 100 to 124 are compositionally biased toward basic residues; sequence QRTKNNSRTRKGKRKTVANKKKATK.

This sequence belongs to the universal ribosomal protein uS13 family. Part of the 30S ribosomal subunit. Forms a loose heterodimer with protein S19. Forms two bridges to the 50S subunit in the 70S ribosome.

Located at the top of the head of the 30S subunit, it contacts several helices of the 16S rRNA. In the 70S ribosome it contacts the 23S rRNA (bridge B1a) and protein L5 of the 50S subunit (bridge B1b), connecting the 2 subunits; these bridges are implicated in subunit movement. Contacts the tRNAs in the A and P-sites. The polypeptide is Small ribosomal subunit protein uS13 (Flavobacterium psychrophilum (strain ATCC 49511 / DSM 21280 / CIP 103535 / JIP02/86)).